The sequence spans 436 residues: Anhydro-N-acetylmuramic acid kinase (436 aa).

32–39 is an ATP binding site; the sequence is GTSLDGMD.

The protein belongs to the anhydro-N-acetylmuramic acid kinase family.

It carries out the reaction 1,6-anhydro-N-acetyl-beta-muramate + ATP + H2O = N-acetyl-D-muramate 6-phosphate + ADP + H(+). It participates in amino-sugar metabolism; 1,6-anhydro-N-acetylmuramate degradation. The protein operates within cell wall biogenesis; peptidoglycan recycling. In terms of biological role, catalyzes the specific phosphorylation of 1,6-anhydro-N-acetylmuramic acid (anhMurNAc) with the simultaneous cleavage of the 1,6-anhydro ring, generating MurNAc-6-P. Is required for the utilization of anhMurNAc either imported from the medium or derived from its own cell wall murein, and thus plays a role in cell wall recycling. This Psychrobacter arcticus (strain DSM 17307 / VKM B-2377 / 273-4) protein is Anhydro-N-acetylmuramic acid kinase.